The sequence spans 518 residues: Xylose import ATP-binding protein XylG (518 aa).

2 consecutive ABC transporter domains span residues leucine 6 to glutamate 245 and phenylalanine 262 to serine 507. Glycine 38–serine 45 is a binding site for ATP.

Belongs to the ABC transporter superfamily. Xylose importer (TC 3.A.1.2.4) family. The complex is composed of two ATP-binding proteins (XylG), two transmembrane proteins (XylH) and a solute-binding protein (XylF).

It is found in the cell inner membrane. The catalysed reaction is D-xylose(out) + ATP + H2O = D-xylose(in) + ADP + phosphate + H(+). Part of the ABC transporter complex XylFGH involved in xylose import. Responsible for energy coupling to the transport system. The sequence is that of Xylose import ATP-binding protein XylG from Pseudomonas syringae pv. syringae (strain B728a).